Consider the following 199-residue polypeptide: RNA-free ribonuclease P (199 aa).

It belongs to the HARP family.

The enzyme catalyses Endonucleolytic cleavage of RNA, removing 5'-extranucleotides from tRNA precursor.. RNA-free RNase P that catalyzes the removal of the 5'-leader sequence from pre-tRNA to produce the mature 5'-terminus. In Pyrococcus furiosus (strain ATCC 43587 / DSM 3638 / JCM 8422 / Vc1), this protein is RNA-free ribonuclease P.